A 379-amino-acid chain; its full sequence is Homoserine O-acetyltransferase (379 aa).

The AB hydrolase-1 domain occupies asparagine 52–glutamate 356. Serine 157 serves as the catalytic Nucleophile. Residue arginine 227 participates in substrate binding. Residues aspartate 320 and histidine 350 contribute to the active site. Aspartate 351 serves as a coordination point for substrate.

The protein belongs to the AB hydrolase superfamily. MetX family. As to quaternary structure, homodimer.

The protein localises to the cytoplasm. The catalysed reaction is L-homoserine + acetyl-CoA = O-acetyl-L-homoserine + CoA. Its pathway is amino-acid biosynthesis; L-methionine biosynthesis via de novo pathway; O-acetyl-L-homoserine from L-homoserine: step 1/1. Functionally, transfers an acetyl group from acetyl-CoA to L-homoserine, forming acetyl-L-homoserine. The chain is Homoserine O-acetyltransferase from Mycobacterium ulcerans (strain Agy99).